We begin with the raw amino-acid sequence, 181 residues long: SAGA-associated factor 11 (181 aa).

The SGF11-type zinc-finger motif lies at 93-114; it reads FNCMNCGRQIVAGRFAPHLEKC. A compositionally biased stretch (basic residues) spans 116–125; sequence GKGRKARAKT. The disordered stretch occupies residues 116-181; sequence GKGRKARAKT…FTVRENVKGD (66 aa). Low complexity predominate over residues 126–153; sequence TRSTTAAQNRNARRSPNPRYSPYPNSAS.

This sequence belongs to the SGF11 family. As to quaternary structure, component of a deubiquitination module (DUB module) formed by ENY2, SGF11, and UBP22 in Arabidopsis. Interacts directly with ENY2 and UBP22. Interacts with DDA1. Ubiquitinated in DET1-dependent manner. Ubiquitination probably leads to its subsequent proteasomal degradation.

The protein resides in the nucleus. Its subcellular location is the nucleoplasm. Component of a deubiquitination module (DUB module) that specifically deubiquinates monoubiquinated histone H2B (H2Bub). Does not seem to be a component of the TREX-2 complex. Seems to act independently of the SAGA multiprotein complex. The DUB module is responsible for the major H2Bub deubiquitinase activity in Arabidopsis. This Arabidopsis thaliana (Mouse-ear cress) protein is SAGA-associated factor 11.